Consider the following 502-residue polypeptide: Sodium/proline symporter (502 aa).

The Periplasmic segment spans residues 1-5 (MAIST). The helical transmembrane segment at 6–26 (PMLVTFCVYIFGMILIGFIAW) threads the bilayer. Topologically, residues 27-41 (RSTKNFDDYILGGRS) are cytoplasmic. 2 hydrophilic regions span residues 27–66 (RSTK…GLPG) and 88–124 (INWK…KSRI). Residues 42-62 (LGPFVTALSAGASDMSGWLLM) form a helical membrane-spanning segment. The Periplasmic portion of the chain corresponds to 63–67 (GLPGA). Residues 68–88 (VFLSGISESWIAIGLTLGAWI) traverse the membrane as a helical segment. Residues 89 to 126 (NWKLVAGRLRVHTEYNNNALTLPDYFTGRFEDKSRILR) are Cytoplasmic-facing. A helical transmembrane segment spans residues 127–147 (IISALVILLFFTIYCASGIVA). The Periplasmic segment spans residues 148–162 (GARLFESTFGMSYET). Residues 151 to 162 (LFESTFGMSYET) form a hydrophilic region. Residues 163-183 (ALWAGAAATILYTFIGGFLAV) form a helical membrane-spanning segment. At 184 to 192 (SWTDTVQAS) the chain is on the cytoplasmic side. Residues 185-189 (WTDTV) are hydrophilic. A helical transmembrane segment spans residues 193–213 (LMIFALILTPVIVIISVGGFG). 3 hydrophilic regions span residues 214 to 231 (DSLE…DMLK), 249 to 274 (FGQP…RRIS), and 296 to 319 (FNDH…ELAQ). Topologically, residues 214-234 (DSLEVIKQKSIENVDMLKGLN) are periplasmic. The helical transmembrane segment at 235 to 255 (FVAIISLMGWGLGYFGQPHIL) threads the bilayer. Over 256-275 (ARFMAADSHHSIVHARRISM) the chain is Cytoplasmic. The chain crosses the membrane as a helical span at residues 276 to 296 (TWMILCLAGAVAVGFFGIAYF). At 297 to 319 (NDHPALAGAVNQNAERVFIELAQ) the chain is on the periplasmic side. Residues 320 to 340 (ILFNPWIAGILLSAILAAVMS) form a helical membrane-spanning segment. At 341 to 370 (TLSCQLLVCSSAITEDLYKAFLRKHASQKE) the chain is on the cytoplasmic side. Positions 341-370 (TLSCQLLVCSSAITEDLYKAFLRKHASQKE) are hydrophilic. Residues 371 to 391 (LVWVGRVMVLVVALVAIALAA) traverse the membrane as a helical segment. Over 392 to 397 (NPENRV) the chain is Periplasmic. The hydrophilic stretch occupies residues 392–397 (NPENRV). Residues 398-418 (LGLVSYAWAGFGAAFGPVVLF) form a helical membrane-spanning segment. Residues 419 to 427 (SVMWSRMTR) lie on the Cytoplasmic side of the membrane. 2 hydrophilic regions span residues 424–430 (RMTRNGA) and 446–448 (QFG). A run of 2 helical transmembrane segments spans residues 428-448 (NGAL…KQFG) and 449-469 (WLGL…IVVF). At 470 to 502 (SLLGKAPSAAMQKRFAEADAHYHSAPPSRLQES) the chain is on the cytoplasmic side. The hydrophilic stretch occupies residues 476–502 (PSAAMQKRFAEADAHYHSAPPSRLQES).

The protein belongs to the sodium:solute symporter (SSF) (TC 2.A.21) family. In terms of assembly, has been isolated from inner membrane preparations as a homodimer.

The protein resides in the cell inner membrane. The enzyme catalyses L-proline(in) + Na(+)(in) = L-proline(out) + Na(+)(out). With respect to regulation, activity is stimulated by phosphatidylethanolamine and phosphatidylglycerol, but not by phosphatidylcholine and cardiolipin. Proline uptake is inhibited by the sulfhydryl reagent N-ethylmaleimide (NEM). Proline, in the presence of Na(+) or Li(+), protects the carrier functions from NEM-inactivation. Its function is as follows. Catalyzes the sodium-dependent uptake of extracellular L-proline. This protein is also capable of using lithium as the transport cation. Also catalyzes the uptake of propionate. In Escherichia coli (strain K12), this protein is Sodium/proline symporter (putP).